The chain runs to 257 residues: Gamma-secretase subunit APH-1B (257 aa).

The next 7 helical transmembrane spans lie at 5–25 (VFFG…VFTI), 32–52 (IIFL…SSLV), 70–90 (YLLI…RFAY), 115–135 (LLAY…SFVN), 158–178 (YSAF…IVFF), 186–206 (WGIL…TFIS), and 213–233 (LASA…AAGG).

It belongs to the APH-1 family. As to quaternary structure, probable component of the gamma-secretase complex, a complex composed of a presenilin homodimer (PSEN1 or PSEN2), nicastrin (NCSTN), APH1 (APH1A or APH1B) and PEN2. Such minimal complex is sufficient for secretase activity, although other components may exist. Interacts with PSEN1 and PSEN2.

It localises to the membrane. Functionally, probable subunit of the gamma-secretase complex, an endoprotease complex that catalyzes the intramembrane cleavage of integral proteins such as Notch receptors and APP (amyloid-beta precursor protein). It probably represents a stabilizing cofactor for the presenilin homodimer that promotes the formation of a stable complex. Probably present in a minority of gamma-secretase complexes compared to APH1A. This chain is Gamma-secretase subunit APH-1B (APH1B), found in Pongo abelii (Sumatran orangutan).